The chain runs to 672 residues: Hydroxyproline O-galactosyltransferase GALT5 (672 aa).

The Cytoplasmic portion of the chain corresponds to 1-28; the sequence is MKKPKLSKVEKIDKIDLFSSLWKQRSVR. Residues 29 to 49 form a helical; Signal-anchor for type II membrane protein membrane-spanning segment; sequence VIMAIGFLYLVIVSVEIPLVF. At 50–672 the chain is on the lumenal side; it reads KSWSSSSVPL…QNKPECCNMR (623 aa). The region spanning 191-392 is the Galectin domain; the sequence is KLMELPCGLT…DIDVHSVFVA (202 aa). Residues Asn306 and Asn620 are each glycosylated (N-linked (GlcNAc...) asparagine).

Belongs to the glycosyltransferase 31 family. The cofactor is Mn(2+). Expressed in juvenile leaves, stems, cauline leaves and siliques.

It localises to the golgi apparatus membrane. It participates in protein modification; protein glycosylation. Functionally, possesses hydroxyproline O-galactosyltransferase activity. Transfers galactose from UDP-galactose to hydroxyproline residues in the arabinogalactan proteins (AGPs). Is specific for AGPs containing non-contiguous peptidyl hydroxyproline residues. Utilizes UDP-galactose solely as sugar donor. The addition of galactose onto the peptidyl hydroxyproline residues in AGP core proteins represents the first committed step in arabinogalactan polysaccharide addition. AGP glycans play essential roles in both vegetative and reproductive plant growth. In Arabidopsis thaliana (Mouse-ear cress), this protein is Hydroxyproline O-galactosyltransferase GALT5.